The following is a 242-amino-acid chain: Uroporphyrinogen-III C-methyltransferase (242 aa).

S-adenosyl-L-homocysteine is bound by residues Pro-12, 88-90, 118-119, and Met-170; these read GGD and TS.

This sequence belongs to the precorrin methyltransferase family. In terms of assembly, homodimer.

It carries out the reaction uroporphyrinogen III + 2 S-adenosyl-L-methionine = precorrin-2 + 2 S-adenosyl-L-homocysteine + H(+). The protein operates within cofactor biosynthesis; adenosylcobalamin biosynthesis; precorrin-2 from uroporphyrinogen III: step 1/1. Its function is as follows. Catalyzes the two successive C-2 and C-7 methylation reactions involved in the conversion of uroporphyrinogen III to precorrin-2 via the intermediate formation of precorrin-1. It is a step in the biosynthesis of both cobalamin (vitamin B12) and coenzyme F430. In Methanocaldococcus jannaschii (strain ATCC 43067 / DSM 2661 / JAL-1 / JCM 10045 / NBRC 100440) (Methanococcus jannaschii), this protein is Uroporphyrinogen-III C-methyltransferase (cobA).